The following is a 179-amino-acid chain: Probable splicing factor, arginine/serine-rich 6 (179 aa).

Residues 3-76 (AKVYVGGLPS…VRARVELSTG (74 aa)) enclose the RRM domain. The disordered stretch occupies residues 75–179 (TGQRRGGGGR…RSRSRSASPH (105 aa)). The segment covering 78–93 (RRGGGGRGGGFGGRGG) has biased composition (gly residues). Residues 94–160 (GGRDRSPYRG…RSPQERDRSH (67 aa)) show a composition bias toward basic and acidic residues. Over residues 161 to 173 (SKSRSRSRSRSRS) the composition is skewed to basic residues.

This sequence belongs to the splicing factor SR family. In terms of processing, extensively phosphorylated on serine residues in the RS domain.

It is found in the nucleus. Its function is as follows. Plays a functionally redundant role in shifting germ cell sexual differentiation in hermaprodites. Required for the development of somatic gonad structures and for progression from larval stage to adulthood. This is Probable splicing factor, arginine/serine-rich 6 (rsp-6) from Caenorhabditis elegans.